The primary structure comprises 375 residues: Chaperone protein DnaJ (375 aa).

Residues 4-68 form the J domain; it reads DYYETLGVDR…ETRARYDQFG (65 aa). Residues 134-216 form a CR-type zinc finger; the sequence is GGEKEIRIPH…CGGAGRKQET (83 aa). The Zn(2+) site is built by cysteine 147, cysteine 150, cysteine 164, cysteine 167, cysteine 190, cysteine 193, cysteine 204, and cysteine 207. CXXCXGXG motif repeat units follow at residues 147–154, 164–171, 190–197, and 204–211; these read CQVCNGSG, CSTCNGAG, CPDCNGAG, and CDACGGAG.

The protein belongs to the DnaJ family. In terms of assembly, homodimer. Zn(2+) serves as cofactor.

It localises to the cytoplasm. Participates actively in the response to hyperosmotic and heat shock by preventing the aggregation of stress-denatured proteins and by disaggregating proteins, also in an autonomous, DnaK-independent fashion. Unfolded proteins bind initially to DnaJ; upon interaction with the DnaJ-bound protein, DnaK hydrolyzes its bound ATP, resulting in the formation of a stable complex. GrpE releases ADP from DnaK; ATP binding to DnaK triggers the release of the substrate protein, thus completing the reaction cycle. Several rounds of ATP-dependent interactions between DnaJ, DnaK and GrpE are required for fully efficient folding. Also involved, together with DnaK and GrpE, in the DNA replication of plasmids through activation of initiation proteins. The polypeptide is Chaperone protein DnaJ (Rippkaea orientalis (strain PCC 8801 / RF-1) (Cyanothece sp. (strain PCC 8801))).